Reading from the N-terminus, the 623-residue chain is Kelch-like protein diablo (623 aa).

A disordered region spans residues 1–54; that stretch reads MGDLPGSGSTAQPRDAAVTGTGGNSTAGGGSSVGSTAVDRPPSPARLSHTSEKH. At T19 the chain carries Phosphothreonine. Positions 20 to 32 are enriched in gly residues; it reads GTGGNSTAGGGSS. The 68-residue stretch at 72 to 139 folds into the BTB domain; sequence CDVVLNVGGR…CYTAHIIVEE (68 aa). The BACK domain maps to 174-276; it reads CLGIRAFADT…SPKFLVGTVG (103 aa). Kelch repeat units lie at residues 323–369, 371–417, 418–464, 466–511, 513–558, and 559–605; these read VLFA…VLND, LYAV…VLDG, FLYA…VLGG, LYAI…VFNN, IYAV…VVNG, and QLYA…VMRA.

It participates in protein modification; protein ubiquitination. Probable substrate-specific adapter of an E3 ubiquitin-protein ligase complex which mediates the ubiquitination and subsequent proteasomal degradation of target proteins. May have a role in synapse differentiation and growth. The chain is Kelch-like protein diablo from Drosophila melanogaster (Fruit fly).